A 306-amino-acid polypeptide reads, in one-letter code: MSERLLRPRATSTVFEALERGAALVALESSVLAQGLEPPYNREAARRMTEAVTAVGAIPVITAISRGTPTLGLDDEDLERFLQRDGVRKVSARDLGIAMADGADGATTVAATLALCALGGLEVFATGGIGGVHRDAPFDESADLIELSRTPVIVVCAGAKSILDLPATLERLETLGVPVVGCGTDELPGFFSLSTGLRLTSRLDRPEQIARAWRAHRALGRESAMLVVQPPPADVAIPADIVDAATRAALQAASLAGIRGAAVTPYLLAQIQQRTEGRSVSANLALLEANARLAGQIAVALVEGTP.

The active-site Proton donor is the Glu28. Substrate-binding residues include Lys89 and Val109. Asp139 is a binding site for Mn(2+). A substrate-binding site is contributed by Ser141–Asp143. Lys160 serves as the catalytic Nucleophile.

The protein belongs to the pseudouridine-5'-phosphate glycosidase family. As to quaternary structure, homotrimer. The cofactor is Mn(2+).

It catalyses the reaction D-ribose 5-phosphate + uracil = psi-UMP + H2O. Catalyzes the reversible cleavage of pseudouridine 5'-phosphate (PsiMP) to ribose 5-phosphate and uracil. Functions biologically in the cleavage direction, as part of a pseudouridine degradation pathway. The protein is Pseudouridine-5'-phosphate glycosidase of Gemmatimonas aurantiaca (strain DSM 14586 / JCM 11422 / NBRC 100505 / T-27).